A 385-amino-acid chain; its full sequence is Mannitol-1-phosphate 5-dehydrogenase (385 aa).

3-14 lines the NAD(+) pocket; the sequence is DVHFGAGNIGRG.

It belongs to the mannitol dehydrogenase family.

The catalysed reaction is D-mannitol 1-phosphate + NAD(+) = beta-D-fructose 6-phosphate + NADH + H(+). The protein is Mannitol-1-phosphate 5-dehydrogenase of Lactiplantibacillus plantarum (strain ATCC BAA-793 / NCIMB 8826 / WCFS1) (Lactobacillus plantarum).